Reading from the N-terminus, the 527-residue chain is Bifunctional purine biosynthesis protein PurH (527 aa).

Residues 1–149 (MASDFLPVRR…KNFARVAVAT (149 aa)) enclose the MGS-like domain.

It belongs to the PurH family.

It carries out the reaction (6R)-10-formyltetrahydrofolate + 5-amino-1-(5-phospho-beta-D-ribosyl)imidazole-4-carboxamide = 5-formamido-1-(5-phospho-D-ribosyl)imidazole-4-carboxamide + (6S)-5,6,7,8-tetrahydrofolate. It catalyses the reaction IMP + H2O = 5-formamido-1-(5-phospho-D-ribosyl)imidazole-4-carboxamide. It functions in the pathway purine metabolism; IMP biosynthesis via de novo pathway; 5-formamido-1-(5-phospho-D-ribosyl)imidazole-4-carboxamide from 5-amino-1-(5-phospho-D-ribosyl)imidazole-4-carboxamide (10-formyl THF route): step 1/1. Its pathway is purine metabolism; IMP biosynthesis via de novo pathway; IMP from 5-formamido-1-(5-phospho-D-ribosyl)imidazole-4-carboxamide: step 1/1. This is Bifunctional purine biosynthesis protein PurH from Xanthomonas oryzae pv. oryzae (strain KACC10331 / KXO85).